Here is a 280-residue protein sequence, read N- to C-terminus: Vitamin B12-binding protein (280 aa).

Positions 1 to 27 are cleaved as a signal peptide; the sequence is MMPLGLFPLPRAAAVLLISLLTLPAQA. In terms of domain architecture, Fe/B12 periplasmic-binding spans 30-277; the sequence is RVISLSPSTT…QMASIPTPVA (248 aa). Tyrosine 57 serves as a coordination point for cyanocob(III)alamin. Cysteine 190 and cysteine 266 form a disulfide bridge.

It belongs to the BtuF family. The complex is composed of two ATP-binding proteins (BtuD), two transmembrane proteins (BtuC) and a solute-binding protein (BtuF).

The protein localises to the periplasm. Part of the ABC transporter complex BtuCDF involved in vitamin B12 import. Binds vitamin B12 and delivers it to the periplasmic surface of BtuC. This chain is Vitamin B12-binding protein, found in Yersinia pestis bv. Antiqua (strain Antiqua).